The sequence spans 698 residues: Glycine--tRNA ligase beta subunit (698 aa).

This sequence belongs to the class-II aminoacyl-tRNA synthetase family. Tetramer of two alpha and two beta subunits.

The protein resides in the cytoplasm. The catalysed reaction is tRNA(Gly) + glycine + ATP = glycyl-tRNA(Gly) + AMP + diphosphate. This Xanthomonas campestris pv. campestris (strain B100) protein is Glycine--tRNA ligase beta subunit.